The sequence spans 301 residues: Probable alpha-L-glutamate ligase (301 aa).

The region spanning 104 to 287 (TQLLARKGIG…IAGTIYAFLE (184 aa)) is the ATP-grasp domain. ATP-binding positions include lysine 141, 178-179 (EY), aspartate 187, and 211-213 (RSN). The Mg(2+) site is built by aspartate 248, glutamate 260, and asparagine 262. Aspartate 248, glutamate 260, and asparagine 262 together coordinate Mn(2+).

Belongs to the RimK family. Requires Mg(2+) as cofactor. The cofactor is Mn(2+).

In Alkalilimnicola ehrlichii (strain ATCC BAA-1101 / DSM 17681 / MLHE-1), this protein is Probable alpha-L-glutamate ligase.